Reading from the N-terminus, the 332-residue chain is Lipoyl synthase (332 aa).

Residues Cys55, Cys60, Cys66, Cys81, Cys85, Cys88, and Ser292 each coordinate [4Fe-4S] cluster. Residues 67 to 281 (WEDREATFLI…SDEAERIGFL (215 aa)) enclose the Radical SAM core domain.

Belongs to the radical SAM superfamily. Lipoyl synthase family. Requires [4Fe-4S] cluster as cofactor.

It is found in the cytoplasm. It catalyses the reaction [[Fe-S] cluster scaffold protein carrying a second [4Fe-4S](2+) cluster] + N(6)-octanoyl-L-lysyl-[protein] + 2 oxidized [2Fe-2S]-[ferredoxin] + 2 S-adenosyl-L-methionine + 4 H(+) = [[Fe-S] cluster scaffold protein] + N(6)-[(R)-dihydrolipoyl]-L-lysyl-[protein] + 4 Fe(3+) + 2 hydrogen sulfide + 2 5'-deoxyadenosine + 2 L-methionine + 2 reduced [2Fe-2S]-[ferredoxin]. The protein operates within protein modification; protein lipoylation via endogenous pathway; protein N(6)-(lipoyl)lysine from octanoyl-[acyl-carrier-protein]: step 2/2. Catalyzes the radical-mediated insertion of two sulfur atoms into the C-6 and C-8 positions of the octanoyl moiety bound to the lipoyl domains of lipoate-dependent enzymes, thereby converting the octanoylated domains into lipoylated derivatives. This chain is Lipoyl synthase, found in Beutenbergia cavernae (strain ATCC BAA-8 / DSM 12333 / CCUG 43141 / JCM 11478 / NBRC 16432 / NCIMB 13614 / HKI 0122).